The following is a 317-amino-acid chain: Ribose-phosphate pyrophosphokinase (317 aa).

ATP-binding positions include 43–45 (DGE) and 102–103 (RQ). Mg(2+)-binding residues include histidine 136 and aspartate 175. Residue lysine 198 is part of the active site. Residues arginine 200, aspartate 224, and 228 to 232 (DTAGT) contribute to the D-ribose 5-phosphate site.

It belongs to the ribose-phosphate pyrophosphokinase family. Class I subfamily. Homohexamer. The cofactor is Mg(2+).

It localises to the cytoplasm. The catalysed reaction is D-ribose 5-phosphate + ATP = 5-phospho-alpha-D-ribose 1-diphosphate + AMP + H(+). Its pathway is metabolic intermediate biosynthesis; 5-phospho-alpha-D-ribose 1-diphosphate biosynthesis; 5-phospho-alpha-D-ribose 1-diphosphate from D-ribose 5-phosphate (route I): step 1/1. Its function is as follows. Involved in the biosynthesis of the central metabolite phospho-alpha-D-ribosyl-1-pyrophosphate (PRPP) via the transfer of pyrophosphoryl group from ATP to 1-hydroxyl of ribose-5-phosphate (Rib-5-P). The chain is Ribose-phosphate pyrophosphokinase from Oceanobacillus iheyensis (strain DSM 14371 / CIP 107618 / JCM 11309 / KCTC 3954 / HTE831).